The following is a 213-amino-acid chain: Virion protein US10 homolog (213 aa).

It belongs to the herpesviridae US10 family. Phosphorylated.

It localises to the virion tegument. The protein localises to the host nucleus matrix. The protein is Virion protein US10 homolog (US639) of Gallid herpesvirus 2 (strain GA) (GaHV-2).